A 103-amino-acid polypeptide reads, in one-letter code: Potassium voltage-gated channel subfamily E member 3 (103 aa).

N-linked (GlcNAc...) asparagine glycans are attached at residues Asn5, Asn22, and Asn41. The interval 32–53 (RPGPGLGPDNQTEERRASLPGR) is disordered. A compositionally biased stretch (basic and acidic residues) spans 43-53 (TEERRASLPGR). The chain crosses the membrane as a helical span at residues 57–77 (SYMYILFVMFLFAVTVGSLIL). Positions 68–79 (FAVTVGSLILGY) are interaction with KCNQ1. Residues 78 to 103 (GYTRSRKVDKRSDPYHVYIKNRVSMI) are Cytoplasmic-facing.

The protein belongs to the potassium channel KCNE family. As to quaternary structure, interacts with KCNB1. Interacts with KCNC2. Associates with KCNC4/Kv3.4. Interacts with KCNQ1; associates with a KCNQ1:KCNE3 stoichiometry of 4:4; produces a current with nearly instantaneous activation with a linear current-voltage relationship and alters membrane raft localization; affects KCNQ1 structure and gating properties. As to expression, expressed in hippocampal neurons (at protein level). Widely expressed with highest levels in kidney and moderate levels in small intestine.

The protein resides in the cell membrane. It is found in the cytoplasm. Its subcellular location is the perikaryon. It localises to the cell projection. The protein localises to the dendrite. The protein resides in the membrane raft. In terms of biological role, ancillary protein that functions as a regulatory subunit of the voltage-gated potassium (Kv) channel complex composed of pore-forming and potassium-conducting alpha subunits and of regulatory beta subunits. KCNE3 beta subunit modulates the gating kinetics and enhances stability of the channel complex. Alters the gating of the delayed rectifier Kv channel containing KCNB1 alpha subunit. Associates with KCNC4/Kv3.4 alpha subunit to form the subthreshold Kv channel in skeletal muscle and to establish the resting membrane potential (RMP) in muscle cells. Association with KCNQ1/KCLQT1 alpha subunit may form the intestinal cAMP-stimulated potassium channel involved in chloride secretion that produces a current with nearly instantaneous activation with a linear current-voltage relationship. In Homo sapiens (Human), this protein is Potassium voltage-gated channel subfamily E member 3.